The sequence spans 130 residues: Protein ApaG (130 aa).

In terms of domain architecture, ApaG spans 3-127 (EHESCGVRIS…FSLDRPSDRL (125 aa)).

The protein is Protein ApaG of Maricaulis maris (strain MCS10) (Caulobacter maris).